A 209-amino-acid chain; its full sequence is Translation initiation factor IF-3 (209 aa).

Belongs to the IF-3 family. In terms of assembly, monomer.

The protein localises to the cytoplasm. Its function is as follows. IF-3 binds to the 30S ribosomal subunit and shifts the equilibrium between 70S ribosomes and their 50S and 30S subunits in favor of the free subunits, thus enhancing the availability of 30S subunits on which protein synthesis initiation begins. The sequence is that of Translation initiation factor IF-3 from Chlorobium phaeovibrioides (strain DSM 265 / 1930) (Prosthecochloris vibrioformis (strain DSM 265)).